We begin with the raw amino-acid sequence, 397 residues long: Enoyl-[acyl-carrier-protein] reductase [NADH] (397 aa).

NAD(+) contacts are provided by residues 47-52, 73-74, 110-111, and 138-139; these read GASTGY, LE, DA, and LA. Tyrosine 224 contributes to the substrate binding site. Residue tyrosine 234 is the Proton donor of the active site. NAD(+) contacts are provided by residues lysine 243 and 272 to 274; that span reads LVT.

This sequence belongs to the TER reductase family. As to quaternary structure, monomer.

The enzyme catalyses a 2,3-saturated acyl-[ACP] + NAD(+) = a (2E)-enoyl-[ACP] + NADH + H(+). Its pathway is lipid metabolism; fatty acid biosynthesis. In terms of biological role, involved in the final reduction of the elongation cycle of fatty acid synthesis (FAS II). Catalyzes the reduction of a carbon-carbon double bond in an enoyl moiety that is covalently linked to an acyl carrier protein (ACP). This is Enoyl-[acyl-carrier-protein] reductase [NADH] from Methylobacillus flagellatus (strain ATCC 51484 / DSM 6875 / VKM B-1610 / KT).